We begin with the raw amino-acid sequence, 449 residues long: Glutamyl-tRNA reductase (449 aa).

Substrate is bound by residues 58 to 61, Ser-121, 126 to 128, and Gln-132; these read TCNR and ETQ. Catalysis depends on Cys-59, which acts as the Nucleophile. 203 to 208 contacts NADP(+); the sequence is GLGEMA.

The protein belongs to the glutamyl-tRNA reductase family. Homodimer.

It carries out the reaction (S)-4-amino-5-oxopentanoate + tRNA(Glu) + NADP(+) = L-glutamyl-tRNA(Glu) + NADPH + H(+). It participates in porphyrin-containing compound metabolism; protoporphyrin-IX biosynthesis; 5-aminolevulinate from L-glutamyl-tRNA(Glu): step 1/2. In terms of biological role, catalyzes the NADPH-dependent reduction of glutamyl-tRNA(Glu) to glutamate 1-semialdehyde (GSA). The protein is Glutamyl-tRNA reductase of Helicobacter pylori (strain Shi470).